The sequence spans 146 residues: Large-conductance mechanosensitive channel (146 aa).

3 consecutive transmembrane segments (helical) span residues 21 to 41 (VGII…ADLI), 44 to 64 (IIGL…LGDG), and 83 to 103 (GSFI…FLLV).

It belongs to the MscL family. In terms of assembly, homopentamer.

It is found in the cell inner membrane. In terms of biological role, channel that opens in response to stretch forces in the membrane lipid bilayer. May participate in the regulation of osmotic pressure changes within the cell. This is Large-conductance mechanosensitive channel from Cereibacter sphaeroides (strain ATCC 17029 / ATH 2.4.9) (Rhodobacter sphaeroides).